A 291-amino-acid chain; its full sequence is Verruculogen synthase (291 aa).

The active site involves tyrosine 68.

Belongs to the PhyH family. In terms of assembly, homodimer. Requires Fe cation as cofactor.

It carries out the reaction fumitremorgin B + 2-oxoglutarate + AH2 + 2 O2 = verruculogen + succinate + A + CO2 + H2O. It functions in the pathway mycotoxin biosynthesis. Verruculogen synthase; part of the gene cluster that mediates the biosynthesis of fumitremorgins, indole alkaloids that carry not only intriguing chemical structures, but also interesting biological and pharmacological activities. The biosynthesis of fumitremorgin-type alkaloids begins by condensation of the two amino acids L-tryptophan and L-proline to brevianamide F, catalyzed by the non-ribosomal peptide synthetase ftmA. Brevianamide F is then prenylated by the prenyltransferase ftmPT1/ftmB in the presence of dimethylallyl diphosphate, resulting in the formation of tryprostatin B. The three cytochrome P450 monooxygenases, ftmP450-1/ftmC, ftmP450-2/ftmE and ftmP450-3/FtmG, are responsible for the conversion of tryprostatin B to 6-hydroxytryprostatin B, tryprostatin A to fumitremorgin C and fumitremorgin C to 12,13-dihydroxyfumitremorgin C, respectively. The putative methyltransferase ftmMT/ftmD is expected for the conversion of 6-hydroxytryprostatin B to tryprostatin A. FtmPT2/FtmH catalyzes the prenylation of 12,13-dihydroxyfumitre-morgin C in the presence of dimethylallyl diphosphate, resulting in the formation of fumitremorgin B. Fumitremorgin B is further converted to verruculogen by ftmOx1/ftmF via the insertion of an endoperoxide bond between the two prenyl moieties. In some fungal species, verruculogen is further converted to fumitremorgin A, but the enzymes involved in this step have not been identified yet. The protein is Verruculogen synthase of Aspergillus fumigatus (strain ATCC MYA-4609 / CBS 101355 / FGSC A1100 / Af293) (Neosartorya fumigata).